Consider the following 1051-residue polypeptide: Helicase POLQ-like (1051 aa).

The segment covering 1-10 (MANKHNLCKK) has biased composition (basic residues). Disordered stretches follow at residues 1–28 (MANKHNLCKKRSLDLSEESTSESHAKRQ) and 61–112 (LFGT…APTD). Composition is skewed to polar residues over residues 64–78 (TQATTSTNKMTQSGS) and 89–102 (SFPSAQSVPPNSAS). The segment covering 103–112 (KPDEASAPTD) has biased composition (basic and acidic residues). Positions 274-446 (LPAIRQRKNL…FLNADVYTRG (173 aa)) constitute a Helicase ATP-binding domain. 287-294 (LPTSGGKT) provides a ligand contact to ATP. A DEAH box motif is present at residues 391–394 (DELH). Residues 497 to 689 (HLAGLISECA…NEAVGLQSLI (193 aa)) enclose the Helicase C-terminal domain.

Belongs to the helicase family. SKI2 subfamily.

The protein localises to the nucleus. It localises to the chromosome. The enzyme catalyses Couples ATP hydrolysis with the unwinding of duplex DNA by translocating in the 3'-5' direction.. It catalyses the reaction ATP + H2O = ADP + phosphate + H(+). Functionally, single-stranded 3'-5' DNA helicase that plays a key role in homology-driven double-strand break (DSB) repair. Involved in different DSB repair mechanisms that are guided by annealing of extensive stretches of complementary bases at break ends, such as microhomology-mediated end-joining (MMEJ), single-strand annealing (SSA) or synthesis-dependent strand annealing (SDSA). The chain is Helicase POLQ-like from Drosophila melanogaster (Fruit fly).